The following is a 313-amino-acid chain: Isoaspartyl peptidase (313 aa).

T179 acts as the Nucleophile in catalysis. Residues 207–210 (RVGD) and 230–233 (TGTG) each bind substrate.

Belongs to the Ntn-hydrolase family. Heterotetramer of two alpha and two beta chains arranged as a dimer of alpha/beta heterodimers. Post-translationally, autocleaved. Generates the alpha and beta subunits. The beta subunit is thought to be responsible for the nucleophile hydrolase activity.

The catalysed reaction is Cleavage of a beta-linked Asp residue from the N-terminus of a polypeptide.. Its function is as follows. Degrades proteins damaged by L-isoaspartyl residue formation (also known as beta-Asp residues). Degrades L-isoaspartyl-containing di- and tripeptides. Acts best on iso-Asp-Leu, followed by iso-Asp-Ala, -His and to a lesser extent iso-Asp-Lys, -Phe and iso-Asp-Leu-Ala. Does not act on internal iso-Asp bonds (Als-iso-Asp-Leu-Ala). Does not act on alpha-Asp bonds. Has poor L-asparaginase activity. This is Isoaspartyl peptidase (iaaA) from Salmonella typhimurium (strain LT2 / SGSC1412 / ATCC 700720).